Here is a 639-residue protein sequence, read N- to C-terminus: uncharacterized protein (639 aa).

The first 16 residues, 1–16, serve as a signal peptide directing secretion; the sequence is MLTLYLFTATCCFVCA. Disordered stretches follow at residues 80–128 and 432–488; these read RRRA…SDKL and QTAT…TSRT. Composition is skewed to polar residues over residues 108 to 122 and 432 to 446; these read TYAT…TASP and QTAT…QQQP. The span at 465 to 480 shows a compositional bias: basic and acidic residues; sequence HGDEPHSDGELRRESH.

This is an uncharacterized protein from Human cytomegalovirus (strain Merlin) (HHV-5).